The sequence spans 155 residues: SsrA-binding protein (155 aa).

It belongs to the SmpB family.

The protein localises to the cytoplasm. In terms of biological role, required for rescue of stalled ribosomes mediated by trans-translation. Binds to transfer-messenger RNA (tmRNA), required for stable association of tmRNA with ribosomes. tmRNA and SmpB together mimic tRNA shape, replacing the anticodon stem-loop with SmpB. tmRNA is encoded by the ssrA gene; the 2 termini fold to resemble tRNA(Ala) and it encodes a 'tag peptide', a short internal open reading frame. During trans-translation Ala-aminoacylated tmRNA acts like a tRNA, entering the A-site of stalled ribosomes, displacing the stalled mRNA. The ribosome then switches to translate the ORF on the tmRNA; the nascent peptide is terminated with the 'tag peptide' encoded by the tmRNA and targeted for degradation. The ribosome is freed to recommence translation, which seems to be the essential function of trans-translation. This Moorella thermoacetica (strain ATCC 39073 / JCM 9320) protein is SsrA-binding protein.